The primary structure comprises 138 residues: 18 kDa antigen 2 (138 aa).

The region spanning 21 to 131 is the sHSP domain; it reads GTRRPAVMPM…KPRRIEINHN (111 aa).

This sequence belongs to the small heat shock protein (HSP20) family.

Not known. This protein is one of the major immune reactive proteins in mycobacteria. The sequence is that of 18 kDa antigen 2 from Mycobacterium avium.